Here is an 813-residue protein sequence, read N- to C-terminus: Lon protease (813 aa).

A Lon N-terminal domain is found at 30-225 (LPILPVRNIV…WLLQLMDKDI (196 aa)). Residue 376–383 (GPPGVGKT) coordinates ATP. Residues 612–793 (DDLAGIVTGL…DEVLAIALLK (182 aa)) enclose the Lon proteolytic domain. Active-site residues include Ser699 and Lys742.

The protein belongs to the peptidase S16 family. In terms of assembly, homohexamer. Organized in a ring with a central cavity.

It localises to the cytoplasm. It catalyses the reaction Hydrolysis of proteins in presence of ATP.. In terms of biological role, ATP-dependent serine protease that mediates the selective degradation of mutant and abnormal proteins as well as certain short-lived regulatory proteins. Required for cellular homeostasis and for survival from DNA damage and developmental changes induced by stress. Degrades polypeptides processively to yield small peptide fragments that are 5 to 10 amino acids long. Binds to DNA in a double-stranded, site-specific manner. The protein is Lon protease of Cytophaga hutchinsonii (strain ATCC 33406 / DSM 1761 / CIP 103989 / NBRC 15051 / NCIMB 9469 / D465).